Here is a 170-residue protein sequence, read N- to C-terminus: Peptide deformylase (170 aa).

Fe cation-binding residues include cysteine 91 and histidine 133. Glutamate 134 is a catalytic residue. Histidine 137 is a Fe cation binding site.

Belongs to the polypeptide deformylase family. Requires Fe(2+) as cofactor.

It carries out the reaction N-terminal N-formyl-L-methionyl-[peptide] + H2O = N-terminal L-methionyl-[peptide] + formate. Functionally, removes the formyl group from the N-terminal Met of newly synthesized proteins. Requires at least a dipeptide for an efficient rate of reaction. N-terminal L-methionine is a prerequisite for activity but the enzyme has broad specificity at other positions. The chain is Peptide deformylase from Histophilus somni (strain 129Pt) (Haemophilus somnus).